The primary structure comprises 332 residues: MAKDPVRVLVTGAAGQIGYALVPMIARGVMLGPDQPVILHMLDIAPAAESLNGVKMELVDAAFPLLKGVVATTDVVEACTGVNIAVMVGGFPRKEGMERKDVMSKNVSIYKSQASALEKHAAANCKVLVVANPANTNALILKEFAPSIPERNISCLTRLDHNRALGQISERLNVQVSDVKNVIIWGNHSSTQYPDVNHATVNTPAGEKPVRQLVSDDAWLNGEFISTVQQRGAAIIKARKLSSALSAASAACDHIRDWVLGTPQGTFVSMGVYSDGSYNVPSGLIYSFPVTCANGEWKIVQGLSIDEFSRKKLDLTAEELTEEKNLAHSCLS.

NAD(+) is bound by residues 16 to 17, Asp43, and Gly90; that span reads QI. Arg99 lines the oxaloacetate pocket. NAD(+) is bound by residues Gln113 and Asn132. Oxaloacetate contacts are provided by Asn132, Arg163, His188, and Ser243. Residue His188 is the Proton acceptor of the active site.

This sequence belongs to the LDH/MDH superfamily. MDH type 2 family. In terms of assembly, homodimer.

The protein localises to the cytoplasm. The enzyme catalyses (S)-malate + NAD(+) = oxaloacetate + NADH + H(+). The chain is Malate dehydrogenase, cytoplasmic (CMDH) from Medicago sativa (Alfalfa).